Reading from the N-terminus, the 238-residue chain is uncharacterized protein (238 aa).

The first 19 residues, 1–19, serve as a signal peptide directing secretion; that stretch reads MKINLFFVFLFELLHFVAA. Topologically, residues 20–197 are lumenal; that stretch reads YSCEGDESAA…LALYGHLSQK (178 aa). Residues 198 to 216 traverse the membrane as a helical segment; it reads YTPLGMNVAIFGISAYIMY. Residues 217 to 238 lie on the Cytoplasmic side of the membrane; sequence RSSKKAKQKQAAAAAAAAAKKK.

Its subcellular location is the endoplasmic reticulum membrane. This is an uncharacterized protein from Schizosaccharomyces pombe (strain 972 / ATCC 24843) (Fission yeast).